A 515-amino-acid chain; its full sequence is Pre-glycoprotein polyprotein GP complex (515 aa).

G2 is lipidated: N-myristoyl glycine; by host. Residues 2–17 lie on the Extracellular side of the membrane; that stretch reads GQVIGFFQSLPEIINE. The chain crosses the membrane as a helical span at residues 18 to 33; that stretch reads ALNIALICVALLATIK. Residues 34-58 lie on the Cytoplasmic side of the membrane; sequence GMVNIWKSGLIQLLFFLTLAGRSCS. A Zn(2+)-binding site is contributed by C57. Topologically, residues 59-453 are extracellular; that stretch reads HSFTIGRFHE…QGRTPLSLVD (395 aa). 4 disulfides stabilise this stretch: C87/C255, C300/C313, C322/C331, and C385/C406. 5 N-linked (GlcNAc...) asparagine; by host glycosylation sites follow: N90, N112, N127, N180, and N248. N-linked (GlcNAc...) asparagine; by host glycans are attached at residues N386, N394, and N416. A helical membrane pass occupies residues 454 to 474; sequence LCFWSTLFYISTLFAHLVGFP. Residues 475–515 lie on the Cytoplasmic side of the membrane; sequence THRHLIGEGCPKPHRLTGSGICSCGHYGIPGKPVRWTKMSR. Residues H476, H478, C484, H488, C496, and C498 each coordinate Zn(2+).

Belongs to the arenaviridae GPC protein family. In terms of assembly, interacts with glycoprotein G2. Part of the GP complex (GP-C) together with glycoprotein G1 and glycoprotein G2. The GP-complex interacts with protein Z, which interacts with ribonucleocapsid; these interactions may induce virion budding. As to quaternary structure, homotrimer; disulfide-linked. In pre-fusion state, G1 homotrimers bind G2 homotrimers via ionic interactions. Part of the GP complex (GP-C) together with glycoprotein G2 and the stable signal peptide. The GP-complex interacts with protein Z, which interacts with ribonucleocapsid; these interactions may induce virion budding. Homotrimer. Interacts with the stable signal peptide. In pre-fusion state, G2 homotrimers bind G1 homotrimers via ionic interactions. Part of the GP complex (GP-C) together with glycoprotein G1 and the stable signal peptide. Acidification in the endosome triggers rearrangements, which ultimately leads to a 6 helix bundle formed by the two heptad repeat domains (HR1 and HR2) in post-fusion state. The GP-complex interacts with protein Z, which interacts with ribonucleocapsid; these interactions may induce virion budding. Specific enzymatic cleavages in vivo yield mature proteins. GP-C polyprotein is cleaved in the endoplasmic reticulum by the host protease MBTPS1. Only cleaved glycoprotein is incorporated into virions. Post-translationally, the SSP remains stably associated with the GP complex following cleavage by signal peptidase and plays crucial roles in the trafficking of GP through the secretory pathway. In terms of processing, myristoylation is necessary for GP2-mediated fusion activity.

It is found in the virion membrane. It localises to the host endoplasmic reticulum membrane. The protein localises to the host Golgi apparatus membrane. The protein resides in the host cell membrane. Its function is as follows. Functions as a cleaved signal peptide that is retained as the third component of the GP complex (GP-C). Helps to stabilize the spike complex in its native conformation. The SSP is required for efficient glycoprotein expression, post-translational maturation cleavage of G1 and G2, glycoprotein transport to the cell surface plasma membrane, formation of infectious virus particles, and acid pH-dependent glycoprotein-mediated cell fusion. Forms the virion spikes together with glycoprotein G2. The glycoprotein spike trimers are connected to the underlying matrix. Mediates virus attachment to host receptor alpha-dystroglycan DAG1. This attachment induces virion internalization predominantly through clathrin- and caveolin-independent endocytosis. Functionally, forms the virion spikes together with glycoprotein G1. The glycoprotein spike trimers are connected to the underlying matrix. Class I viral fusion protein that directs fusion of viral and host endosomal membranes, leading to delivery of the nucleocapsid into the cytoplasm. Membrane fusion is mediated by irreversible conformational changes induced by acidification. The polypeptide is Pre-glycoprotein polyprotein GP complex (Latino mammarenavirus (isolate Rat/Bolivia/MARU 1924/1965) (LATV)).